The following is a 309-amino-acid chain: Postacrosomal sheath WW domain-binding protein (309 aa).

Residues 45-87 (GRKTGTLFLTSYRVIFITSCSISDPMLSFMMPFDLMTNLTVEQ) form the GRAM domain. Tandem repeats lie at residues 175–181 (YGAPPAG), 182–188 (YGAPPPG), 189–195 (YGAPPAG), 217–223 (YGAPPLG), 224–230 (YGAPPAG), 231–237 (YGAPPLG), 238–244 (YGAPPLG), 245–251 (YGTPPLG), 252–258 (YGAPPLG), and 259–265 (YGAPPAG). The 10 X 7 AA tandem repeat of Y-G-X-P-P-X-G stretch occupies residues 175–265 (YGAPPAGYGA…PLGYGAPPAG (91 aa)). A PPxY motif motif is present at residues 186–189 (PPGY). Residues 251 to 272 (GYGAPPLGYGAPPAGNEGPPAG) are compositionally biased toward low complexity. Positions 251–309 (GYGAPPLGYGAPPAGNEGPPAGYRASPAGSGARPQESTAAQAPENEASLPSASSSQVHS) are disordered. Residues 298–309 (SLPSASSSQVHS) show a composition bias toward polar residues.

As to expression, expressed in testis.

Its function is as follows. May play a role in meiotic resumption and pronuclear formation, mediated by a WW domain-signaling pathway during fertilization. The sequence is that of Postacrosomal sheath WW domain-binding protein (WBP2NL) from Homo sapiens (Human).